Reading from the N-terminus, the 311-residue chain is MQLEFLGTGAGSPGKFRNVTSTALRLLDERNEVWLFDVGEGTQHQILRTTLKPRKIAKIFITHLHGDHIFGLPGLLSSRSFQGGDEPLTIYGPVGVRDFVQTALRVSGTHLSYPLKFHEITKAETVFEDATFKVSCEPLDHRIACFGYRVEEADHPGELQADRLKALNIPSGPVYGQLKAGKTVTLPDGRTINGQDYIAAPQKGRTVTILGDTRRTPHAVSLAQDADALVHESTFGKDEGKLAHNYYHSTSTQAAQVAQQAGVKQLLLTHISARYTGKLSKELQKQAQKVFSHSKVVRDFDVIDIPLPEKG.

Zn(2+) contacts are provided by His63, His65, Asp67, His68, His141, Asp212, and His270. The Proton acceptor role is filled by Asp67.

Belongs to the RNase Z family. Homodimer. Zn(2+) is required as a cofactor.

The enzyme catalyses Endonucleolytic cleavage of RNA, removing extra 3' nucleotides from tRNA precursor, generating 3' termini of tRNAs. A 3'-hydroxy group is left at the tRNA terminus and a 5'-phosphoryl group is left at the trailer molecule.. In terms of biological role, zinc phosphodiesterase, which displays some tRNA 3'-processing endonuclease activity. Probably involved in tRNA maturation, by removing a 3'-trailer from precursor tRNA. This Lactiplantibacillus plantarum (strain ATCC BAA-793 / NCIMB 8826 / WCFS1) (Lactobacillus plantarum) protein is Ribonuclease Z.